Reading from the N-terminus, the 751-residue chain is Phosphoribosylformylglycinamidine synthase subunit PurL (751 aa).

The active site involves His-54. ATP is bound by residues Tyr-57 and Lys-106. Residue Glu-108 participates in Mg(2+) binding. Residues Ser-109–His-112 and Arg-131 contribute to the substrate site. His-110 (proton acceptor) is an active-site residue. Position 132 (Asp-132) interacts with Mg(2+). Gln-256 serves as a coordination point for substrate. Position 284 (Asp-284) interacts with Mg(2+). A substrate-binding site is contributed by Glu-328–Gln-330. The ATP site is built by Asp-516 and Gly-553. Asn-554 lines the Mg(2+) pocket. Ser-556 lines the substrate pocket.

Belongs to the FGAMS family. In terms of assembly, monomer. Part of the FGAM synthase complex composed of 1 PurL, 1 PurQ and 2 PurS subunits.

The protein resides in the cytoplasm. It carries out the reaction N(2)-formyl-N(1)-(5-phospho-beta-D-ribosyl)glycinamide + L-glutamine + ATP + H2O = 2-formamido-N(1)-(5-O-phospho-beta-D-ribosyl)acetamidine + L-glutamate + ADP + phosphate + H(+). It functions in the pathway purine metabolism; IMP biosynthesis via de novo pathway; 5-amino-1-(5-phospho-D-ribosyl)imidazole from N(2)-formyl-N(1)-(5-phospho-D-ribosyl)glycinamide: step 1/2. Functionally, part of the phosphoribosylformylglycinamidine synthase complex involved in the purines biosynthetic pathway. Catalyzes the ATP-dependent conversion of formylglycinamide ribonucleotide (FGAR) and glutamine to yield formylglycinamidine ribonucleotide (FGAM) and glutamate. The FGAM synthase complex is composed of three subunits. PurQ produces an ammonia molecule by converting glutamine to glutamate. PurL transfers the ammonia molecule to FGAR to form FGAM in an ATP-dependent manner. PurS interacts with PurQ and PurL and is thought to assist in the transfer of the ammonia molecule from PurQ to PurL. The chain is Phosphoribosylformylglycinamidine synthase subunit PurL from Nocardioides sp. (strain ATCC BAA-499 / JS614).